The following is a 300-amino-acid chain: MEKYTNWRDNGTGIAPFLPNTIRKPSKVMTACLLGILGVKTIIMLPLIMLYLLTGQNNLLGLILKFTFSWKEEITVQGIKKRDVRKSKHYPQKGKLYICNCTSPLDAFSVVLLAQGPVTLLVPSNDIVYKVSIREFINFILAGGLDIKLYGHEVAELSQLGNTVNFMFAEGTSCNGKSVLPFSITGKKLKEFIDPSITTMNPAMAKTKKFELQTIQIKTNKTAITTLPISNMEYLSRFLNKGINVKCKINEPQVLSDNLEELRVALNGGDKYKLVSRKLDVESKRNFVKEYISDQRKKRK.

The chain crosses the membrane as a helical span at residues 33–53 (LLGILGVKTIIMLPLIMLYLL). An HXXXXD motif motif is present at residues 101–106 (CTSPLD).

This sequence belongs to the 1-acyl-sn-glycerol-3-phosphate acyltransferase family.

Its subcellular location is the lipid droplet. The protein resides in the endoplasmic reticulum membrane. It carries out the reaction a 1-acyl-sn-glycero-3-phosphate + an acyl-CoA = a 1,2-diacyl-sn-glycero-3-phosphate + CoA. It catalyses the reaction 1-hexadecanoyl-sn-glycero-3-phosphate + (9Z)-octadecenoyl-CoA = 1-hexadecanoyl-2-(9Z-octadecenoyl)-sn-glycero-3-phosphate + CoA. Functionally, acyl-CoA-dependent lysophosphatidic acid acyltransferase with preference for oleoyl-CoA. Involved in triacylglyceride homeostasis and lipid droplet formation. Involved in vacuolar protein sorting. In Saccharomyces cerevisiae (strain ATCC 204508 / S288c) (Baker's yeast), this protein is Lysophosphatidic acid:oleoyl-CoA acyltransferase 1.